The primary structure comprises 192 residues: UPF0312 protein PputGB1_5030 (192 aa).

An N-terminal signal peptide occupies residues 1–23; sequence MLKKTFAALALGTALLSAGQAMA.

The protein belongs to the UPF0312 family. Type 1 subfamily.

It localises to the periplasm. This chain is UPF0312 protein PputGB1_5030, found in Pseudomonas putida (strain GB-1).